A 487-amino-acid chain; its full sequence is NADH-quinone oxidoreductase subunit N (487 aa).

14 helical membrane-spanning segments follow: residues 12–32, 40–60, 79–99, 104–124, 129–149, 164–184, 201–221, 248–268, 281–301, 310–330, 332–352, 378–398, 411–431, and 455–475; these read VLIL…LIGV, LTVT…IVLF, YMKI…VGFS, FDIF…MLMI, MLSL…LAAI, FVLG…LYGF, ILHL…AFKI, APKI…FIPL, ILIF…IGQT, SSIG…ILGV, GILI…AFIL, AIVM…AGFF, GLVP…FYYL, and LCLC…FWFS.

Belongs to the complex I subunit 2 family. As to quaternary structure, NDH-1 is composed of 14 different subunits. Subunits NuoA, H, J, K, L, M, N constitute the membrane sector of the complex.

It localises to the cell inner membrane. The catalysed reaction is a quinone + NADH + 5 H(+)(in) = a quinol + NAD(+) + 4 H(+)(out). Functionally, NDH-1 shuttles electrons from NADH, via FMN and iron-sulfur (Fe-S) centers, to quinones in the respiratory chain. The immediate electron acceptor for the enzyme in this species is believed to be ubiquinone. Couples the redox reaction to proton translocation (for every two electrons transferred, four hydrogen ions are translocated across the cytoplasmic membrane), and thus conserves the redox energy in a proton gradient. This Bartonella bacilliformis (strain ATCC 35685 / KC583 / Herrer 020/F12,63) protein is NADH-quinone oxidoreductase subunit N.